We begin with the raw amino-acid sequence, 576 residues long: TOX high mobility group box family member 3 (576 aa).

Disordered stretches follow at residues Asn189 to Pro258, Thr422 to Met443, and Leu519 to Ser563. Positions Ala204 to Ser215 are enriched in low complexity. Residues Glu223 to Lys239 are compositionally biased toward basic and acidic residues. Over residues Lys240–Lys250 the composition is skewed to basic residues. A DNA-binding region (HMG box) is located at residues Pro255–Arg323. The span at Pro428–Met443 shows a compositional bias: low complexity. A compositionally biased stretch (polar residues) spans Pro528–Ser542. Over residues Ser549–Ser563 the composition is skewed to low complexity.

Homodimer. Interacts with CREB1; the interaction is not depolarization dependent. Interacts with CREBBP (via C-terminus). Interacts (via HGM box) with CITED1 (via C-terminus); the interaction increases estrogen-response element (ERE)-dependent transcription and protection against cell death. Interacts with CREB1 (phosphorylated form). As to expression, expressed mainly in epithelial cells. Expressed in the central nervous system (CNS), in the ileum and within the brain in the frontal and occipital lobe.

The protein localises to the nucleus. Functionally, transcriptional coactivator of the p300/CBP-mediated transcription complex. Activates transactivation through cAMP response element (CRE) sites. Protects against cell death by inducing antiapoptotic and repressing pro-apoptotic transcripts. Stimulates transcription from the estrogen-responsive or BCL-2 promoters. Required for depolarization-induced transcription activation of the C-FOS promoter in neurons. Associates with chromatin to the estrogen-responsive C3 promoter region. The polypeptide is TOX high mobility group box family member 3 (TOX3) (Homo sapiens (Human)).